The chain runs to 199 residues: COMM domain-containing protein 2 (199 aa).

The region spanning 123–190 (SYHNLEWRLD…QALEEMKTNH (68 aa)) is the COMM domain.

Belongs to the COMM domain-containing protein 2 family. In terms of assembly, component of the commander complex consisting of the CCC subcomplex and the retriever subcomplex. Component of the CCC (COMMD/CCDC22/CCDC93) subcomplex consisting of COMMD1, COMMD2, COMMD3, COMMD4, COMMD5, COMMD6, COMMD7, COMMD8, COMMD9, COMMD10, CCDC22 and CCDC93; within the complex forms a heterodimer with COMMD3. Interacts with RELA, RELB, NFKB1/p105, NFKB2/p100. Interacts with CCDC22, CCDC93, SCNN1B, CUL3, CUL4B, CUL5, CUL7.

Its subcellular location is the cytoplasm. Functionally, scaffold protein in the commander complex that is essential for endosomal recycling of transmembrane cargos; the commander complex is composed of the CCC subcomplex and the retriever subcomplex. May modulate activity of cullin-RING E3 ubiquitin ligase (CRL) complexes. May down-regulate activation of NF-kappa-B. This Pongo abelii (Sumatran orangutan) protein is COMM domain-containing protein 2 (COMMD2).